The following is a 268-amino-acid chain: Glutamate 5-kinase (268 aa).

Position 15 (Lys15) interacts with ATP. Positions 55, 142, and 158 each coordinate substrate. An ATP-binding site is contributed by Ser178–Asp179.

Belongs to the glutamate 5-kinase family.

The protein resides in the cytoplasm. The enzyme catalyses L-glutamate + ATP = L-glutamyl 5-phosphate + ADP. Its pathway is amino-acid biosynthesis; L-proline biosynthesis; L-glutamate 5-semialdehyde from L-glutamate: step 1/2. In terms of biological role, catalyzes the transfer of a phosphate group to glutamate to form L-glutamate 5-phosphate. This Oenococcus oeni (strain ATCC BAA-331 / PSU-1) protein is Glutamate 5-kinase.